We begin with the raw amino-acid sequence, 361 residues long: MGSSFGKLFTISSFGESHGGGVGVIIDGCPPRLELDINEIQNDLNRRRPGQSKITTPRNESDEVEILSGLLGNKTLGTPIAMVVRNKDHRPKDYSEIKKTFRPSHADATYQKKYGIQASSGGGRASARETIGRVAAGSVAKQLLNKSAKTEILAWVKRIHDIEAEIHPSEVTFDEIEKNIVRCPNQSAADLMIQRVEAFGKEGDSCGGVIECVVRNPPIGIGMPVFDKLEADLAKALMSLPATKGFEVGSGFGGTYLKGSEHNDPFLPSDSNQLKTATNNSGGIQGGISNGEDIVLRVGFKPTATIRKSQKTIDEDGNAITLKATGRHDPCVLPRAVPMVEAMVALVLADHLLRQRGQCPD.

Arg-47 contributes to the NADP(+) binding site. FMN contacts are provided by residues 124-126 (RAS), Gly-286, 301-305 (KPTAT), and Arg-327.

This sequence belongs to the chorismate synthase family. Homotetramer. The cofactor is FMNH2.

The catalysed reaction is 5-O-(1-carboxyvinyl)-3-phosphoshikimate = chorismate + phosphate. The protein operates within metabolic intermediate biosynthesis; chorismate biosynthesis; chorismate from D-erythrose 4-phosphate and phosphoenolpyruvate: step 7/7. In terms of biological role, catalyzes the anti-1,4-elimination of the C-3 phosphate and the C-6 proR hydrogen from 5-enolpyruvylshikimate-3-phosphate (EPSP) to yield chorismate, which is the branch point compound that serves as the starting substrate for the three terminal pathways of aromatic amino acid biosynthesis. This reaction introduces a second double bond into the aromatic ring system. This Prochlorococcus marinus (strain NATL2A) protein is Chorismate synthase.